The primary structure comprises 951 residues: 5'-3' exoribonuclease 2 (951 aa).

The CCHC-type zinc-finger motif lies at 262-278; the sequence is PCALCNQFGHEVKDCEG. N6-acetyllysine is present on K286. The segment at 408 to 508 is disordered; the sequence is KDDEDSFRRR…SDSEPEPEDN (101 aa). Residues 416-426 show a composition bias toward basic residues; sequence RRQKEKRKRMK. Position 439 is a phosphothreonine (T439). Composition is skewed to polar residues over residues 445 to 458 and 467 to 485; these read SRNSPGCQVASNPR and QRNSSPSISPNTSFASDGS. A phosphoserine mark is found at S448, S471, S473, S475, S482, S487, S499, S501, and S678. Asymmetric dimethylarginine; alternate is present on residues R824, R847, and R851. Omega-N-methylarginine; alternate is present on residues R824, R847, and R851. An Asymmetric dimethylarginine modification is found at R880. R883 is modified (asymmetric dimethylarginine; alternate). Position 883 is an omega-N-methylarginine; alternate (R883). An Omega-N-methylarginine modification is found at R895. The tract at residues 907–951 is disordered; sequence NQYQMLGGPGGYPPRRDDHRGGRQGYPREGRKYPLPPPSGRYSWN. Positions 920–938 are enriched in basic and acidic residues; that stretch reads PRRDDHRGGRQGYPREGRK. R947 is modified (asymmetric dimethylarginine; alternate). R947 is modified (omega-N-methylarginine; alternate).

This sequence belongs to the 5'-3' exonuclease family. XRN2/RAT1 subfamily. Interacts with POLR2A and SMN1/SMN2. Interacts with CDKN2AIP and NKRF. Interacts with CDKN2AIPNL; the interaction is direct. Interacts with TRIM71 (via NHL repeats) in an RNA-dependent manner. Interacts with DHX34; the interaction is RNA-independent. In terms of tissue distribution, expressed in the spleen, testis, heart, brain, lung, liver, skeletal muscle, and kidney.

Its subcellular location is the nucleus. It localises to the nucleolus. Its function is as follows. Possesses 5'-&gt;3' exoribonuclease activity. May promote the termination of transcription by RNA polymerase II. During transcription termination, cleavage at the polyadenylation site liberates a 5' fragment which is subsequently processed to form the mature mRNA and a 3' fragment which remains attached to the elongating polymerase. The processive degradation of this 3' fragment by this protein may promote termination of transcription. Binds to RNA polymerase II (RNAp II) transcription termination R-loops formed by G-rich pause sites. This is 5'-3' exoribonuclease 2 (Xrn2) from Mus musculus (Mouse).